Consider the following 369-residue polypeptide: Anhydro-N-acetylmuramic acid kinase (369 aa).

12-19 contacts ATP; it reads GTSMDGVD.

It belongs to the anhydro-N-acetylmuramic acid kinase family.

The enzyme catalyses 1,6-anhydro-N-acetyl-beta-muramate + ATP + H2O = N-acetyl-D-muramate 6-phosphate + ADP + H(+). The protein operates within amino-sugar metabolism; 1,6-anhydro-N-acetylmuramate degradation. It participates in cell wall biogenesis; peptidoglycan recycling. Its function is as follows. Catalyzes the specific phosphorylation of 1,6-anhydro-N-acetylmuramic acid (anhMurNAc) with the simultaneous cleavage of the 1,6-anhydro ring, generating MurNAc-6-P. Is required for the utilization of anhMurNAc either imported from the medium or derived from its own cell wall murein, and thus plays a role in cell wall recycling. This Shewanella sp. (strain MR-4) protein is Anhydro-N-acetylmuramic acid kinase.